The primary structure comprises 84 residues: UPF0473 protein CLJ_B2791 (84 aa).

This sequence belongs to the UPF0473 family.

This Clostridium botulinum (strain 657 / Type Ba4) protein is UPF0473 protein CLJ_B2791.